Here is a 296-residue protein sequence, read N- to C-terminus: Ribosomal protein L11 methyltransferase (296 aa).

Residues Thr145, Gly166, Asp188, and Asn230 each coordinate S-adenosyl-L-methionine.

It belongs to the methyltransferase superfamily. PrmA family.

Its subcellular location is the cytoplasm. It carries out the reaction L-lysyl-[protein] + 3 S-adenosyl-L-methionine = N(6),N(6),N(6)-trimethyl-L-lysyl-[protein] + 3 S-adenosyl-L-homocysteine + 3 H(+). In terms of biological role, methylates ribosomal protein L11. This is Ribosomal protein L11 methyltransferase from Histophilus somni (strain 2336) (Haemophilus somnus).